A 94-amino-acid chain; its full sequence is Ribonuclease VapC3 (94 aa).

A Mg(2+)-binding site is contributed by aspartate 6.

It belongs to the PINc/VapC protein family. The cofactor is Mg(2+).

Functionally, toxic component of a type II toxin-antitoxin (TA) system. An RNase. Its cognate antitoxin is VapB3. This is Ribonuclease VapC3 (vapC3) from Methanocaldococcus jannaschii (strain ATCC 43067 / DSM 2661 / JAL-1 / JCM 10045 / NBRC 100440) (Methanococcus jannaschii).